The chain runs to 383 residues: Homoserine O-succinyltransferase (383 aa).

Residues 51–361 enclose the AB hydrolase-1 domain; that stretch reads NALLICHALS…ESDFGHDAFL (311 aa). Residue serine 157 is the Nucleophile of the active site. A substrate-binding site is contributed by arginine 227. Active-site residues include aspartate 324 and histidine 357. Substrate is bound at residue aspartate 358.

It belongs to the AB hydrolase superfamily. MetX family. Homodimer.

It localises to the cytoplasm. The enzyme catalyses L-homoserine + succinyl-CoA = O-succinyl-L-homoserine + CoA. It participates in amino-acid biosynthesis; L-methionine biosynthesis via de novo pathway; O-succinyl-L-homoserine from L-homoserine: step 1/1. Its function is as follows. Transfers a succinyl group from succinyl-CoA to L-homoserine, forming succinyl-L-homoserine. In Teredinibacter turnerae (strain ATCC 39867 / T7901), this protein is Homoserine O-succinyltransferase.